Reading from the N-terminus, the 147-residue chain is Hemoglobin subunit beta (147 aa).

The Globin domain occupies 3-147 (HWTAEEKQLI…VAHALARKYH (145 aa)). Histidine 64 and histidine 93 together coordinate heme b.

It belongs to the globin family. Heterotetramer of 2 alpha (or alpha-D) and 2 beta chains. As to expression, red blood cells.

Its function is as follows. Involved in oxygen transport from the lung to the various peripheral tissues. The beta chain is a component of adult hemoglobin A and D. This Gallus gallus (Chicken) protein is Hemoglobin subunit beta (HBB).